Consider the following 1633-residue polypeptide: D-lysergyl-peptide-synthetase subunit 3 (1633 aa).

Residues 80–483 (FRQRCDLHPD…GRKDSQIKIR (404 aa)) form an adenylation (A) domain region. The Carrier domain occupies 622-691 (EEHRLQRMYS…RLKDLARKAS (70 aa)). An O-(pantetheine 4'-phosphoryl)serine modification is found at Ser-654. A condensation (C) domain region spans residues 836–1127 (PLVRMKLVEG…ILGQIHGKEA (292 aa)). The tract at residues 1256–1483 (VTGASGFIGT…EYNSSAGSEW (228 aa)) is reductase (R) domain.

The protein belongs to the NRP synthetase family.

It functions in the pathway alkaloid biosynthesis; ergot alkaloid biosynthesis. In terms of biological role, D-lysergyl-peptide-synthetase subunit 3; part of the gene cluster that mediates the biosynthesis of fungal ergot alkaloid. DmaW catalyzes the first step of ergot alkaloid biosynthesis by condensing dimethylallyl diphosphate (DMAP) and tryptophan to form 4-dimethylallyl-L-tryptophan. The second step is catalyzed by the methyltransferase easF that methylates 4-dimethylallyl-L-tryptophan in the presence of S-adenosyl-L-methionine, resulting in the formation of 4-dimethylallyl-L-abrine. The catalase easC and the FAD-dependent oxidoreductase easE then transform 4-dimethylallyl-L-abrine to chanoclavine-I which is further oxidized by easD in the presence of NAD(+), resulting in the formation of chanoclavine-I aldehyde. Agroclavine dehydrogenase easG then mediates the conversion of chanoclavine-I aldehyde to agroclavine via a non-enzymatic adduct reaction: the substrate is an iminium intermediate that is formed spontaneously from chanoclavine-I aldehyde in the presence of glutathione. The presence of easA is not required to complete this reaction. Further conversion of agroclavine to paspalic acid is a two-step process involving oxidation of agroclavine to elymoclavine and of elymoclavine to paspalic acid, the second step being performed by the elymoclavine oxidase cloA. Paspalic acid is then further converted to D-lysergic acid. Ergopeptines are assembled from D-lysergic acid and three different amino acids by the D-lysergyl-peptide-synthetases composed each of a monomudular and a trimodular nonribosomal peptide synthetase subunit. LpsB and lpsC encode the monomodular subunits responsible for D-lysergic acid activation and incorporation into the ergopeptine backbone. LpsA1 and A2 subunits encode the trimodular nonribosomal peptide synthetase assembling the tripeptide portion of ergopeptines. LpsA1 is responsible for formation of the major ergopeptine, ergotamine, and lpsA2 for alpha-ergocryptine, the minor ergopeptine of the total alkaloid mixture elaborated by C.purpurea. D-lysergyl-tripeptides are assembled by the nonribosomal peptide synthetases and released as N-(D-lysergyl-aminoacyl)-lactams. Cyclolization of the D-lysergyl-tripeptides is performed by the Fe(2+)/2-ketoglutarate-dependent dioxygenase easH which introduces a hydroxyl group into N-(D-lysergyl-aminoacyl)-lactam at alpha-C of the aminoacyl residue followed by spontaneous condensation with the terminal lactam carbonyl group. The chain is D-lysergyl-peptide-synthetase subunit 3 from Claviceps purpurea (Ergot fungus).